We begin with the raw amino-acid sequence, 363 residues long: 3-ketodihydrosphingosine reductase TSC10 (363 aa).

Leu10 contributes to the NADP(+) binding site. 3 residues coordinate NADPH: Gly13, Ser15, and Gly17. A GXSXG motif is present at residues 13–17; it reads GGSQG. Leu18 serves as a coordination point for NADP(+). Residues Arg40, Lys44, Asp131, and Leu132 each contribute to the NADPH site. Residue Asp131 participates in NADP(+) binding. The active-site Proton donor is Ser206. 3 residues coordinate NADP(+): Tyr220, Lys224, and Ser253. Residue Tyr220 is the Proton acceptor of the active site. Lys224 acts as the Lowers pKa of active site Tyr in catalysis. Residues 324-344 traverse the membrane as a helical segment; sequence FVQWLIGVIANLLVVPFYMVL.

This sequence belongs to the short-chain dehydrogenases/reductases (SDR) family.

It localises to the endoplasmic reticulum membrane. The catalysed reaction is sphinganine + NADP(+) = 3-oxosphinganine + NADPH + H(+). Its pathway is lipid metabolism; sphingolipid metabolism. Its function is as follows. Catalyzes the reduction of 3'-oxosphinganine (3-ketodihydrosphingosine/KDS) to sphinganine (dihydrosphingosine/DHS), the second step of de novo sphingolipid biosynthesis. In Candida glabrata (strain ATCC 2001 / BCRC 20586 / JCM 3761 / NBRC 0622 / NRRL Y-65 / CBS 138) (Yeast), this protein is 3-ketodihydrosphingosine reductase TSC10 (TSC10).